The following is a 756-amino-acid chain: Sodium/hydrogen exchanger 8 (756 aa).

Topologically, residues 1–31 (MTSIIGAALPYKSPEKAIASSSYSAENDSSP) are extracellular. Asparagine 27 carries an N-linked (GlcNAc...) asparagine glycan. Residues 32–52 (VDAVIFAGTSLVLGTACRYLF) form a helical membrane-spanning segment. Residues 53 to 56 (NGTR) lie on the Cytoplasmic side of the membrane. Residues 57 to 77 (VPYTVVLLVIGIFLGSLEYGT) traverse the membrane as a helical segment. Over 78 to 89 (KHNLGKLGHGIR) the chain is Extracellular. Residues 90-110 (IWNGINPDLLLAVFLPVLLFE) form a helical membrane-spanning segment. The Cytoplasmic segment spans residues 111–125 (SSFSMDVHQIKRCMG). Residues 126-146 (QMVLLAGPGVLISTFCLGALI) form a helical membrane-spanning segment. The Extracellular segment spans residues 147 to 157 (KLTFPYNWDWK). The helical transmembrane segment at 158 to 178 (TSLLLGGLLGATDPVAVVALL) threads the bilayer. The Cytoplasmic segment spans residues 179–194 (KELGASKKMTTLIDGE). A helical transmembrane segment spans residues 195–215 (SLMNDGVSVVVFQLFFKMVMG). The Extracellular segment spans residues 216 to 225 (HNSDWGSIIK). The helical transmembrane segment at 226-248 (FLVQNSFGAVGIGLAFGIASVFW) threads the bilayer. The Cytoplasmic segment spans residues 249 to 251 (LKF). A helical transmembrane segment spans residues 252-271 (IFNDTVAQITVTLSASYFAY). Over 272–276 (YTAQE) the chain is Extracellular. Residues 277 to 297 (WAGVSGILTVMILGMFFAAFA) traverse the membrane as a helical segment. At 298–311 (RTAFKGDSHQSLHH) the chain is on the cytoplasmic side. Residues 312-332 (FWEMAAYIANTLVFMLSGVII) form a helical membrane-spanning segment. The Extracellular portion of the chain corresponds to 333 to 350 (AESVLSGQTISYKGNSWS). The helical transmembrane segment at 351-371 (FLFLLYLYVQLSRCVVVGVLY) threads the bilayer. Residues 372–385 (PLLCRSGYGLDWKE) lie on the Cytoplasmic side of the membrane. A helical transmembrane segment spans residues 386–406 (SIILTWSGLRGAVSLSLALSV). At 407-422 (KQSSGNSYLSSDTGTR) the chain is on the extracellular side. The chain crosses the membrane as a helical span at residues 423-443 (FLFLTGGIVFLTLVVNGSTTQ). The Cytoplasmic portion of the chain corresponds to 444–756 (LLLHLLRMDT…RSLAIGETDA (313 aa)).

Belongs to the monovalent cation:proton antiporter 1 (CPA1) transporter (TC 2.A.36) family.

The protein localises to the cell membrane. The catalysed reaction is Na(+)(in) + H(+)(out) = Na(+)(out) + H(+)(in). It carries out the reaction K(+)(in) + H(+)(out) = K(+)(out) + H(+)(in). In terms of biological role, may act in low affinity electroneutral exchange of protons for cations such as Na(+) or K(+) across membranes. May also exchange Li(+) and Cs(+) with a lower affinity. In Arabidopsis thaliana (Mouse-ear cress), this protein is Sodium/hydrogen exchanger 8 (NHX8).